Reading from the N-terminus, the 289-residue chain is 33 kDa chaperonin (289 aa).

Cystine bridges form between cysteine 225–cysteine 227 and cysteine 258–cysteine 261.

The protein belongs to the HSP33 family. Post-translationally, under oxidizing conditions two disulfide bonds are formed involving the reactive cysteines. Under reducing conditions zinc is bound to the reactive cysteines and the protein is inactive.

It is found in the cytoplasm. Redox regulated molecular chaperone. Protects both thermally unfolding and oxidatively damaged proteins from irreversible aggregation. Plays an important role in the bacterial defense system toward oxidative stress. The polypeptide is 33 kDa chaperonin (Nitrosococcus oceani (strain ATCC 19707 / BCRC 17464 / JCM 30415 / NCIMB 11848 / C-107)).